The sequence spans 568 residues: Vacuolar protein 8 (568 aa).

Gly-2 carries the N-myristoyl glycine lipid modification. Residues Cys-4, Cys-5, and Cys-7 are each lipidated (S-palmitoyl cysteine). ARM repeat units follow at residues 37–74, 75–114, 116–155, 157–196, 198–237, 241–280, 282–321, 323–363, and 407–446; these read DKDN…FAEI, TEKY…NLAV, NENK…NLAT, DDNK…NMTH, GENR…NIAV, NRRK…NLAS, TGYQ…NISI, PLNE…NLAA, and DNSK…NLCS.

This sequence belongs to the beta-catenin family.

Its subcellular location is the vacuole membrane. Functionally, functions in both vacuole inheritance and protein targeting from the cytoplasm to vacuole. In Eremothecium gossypii (strain ATCC 10895 / CBS 109.51 / FGSC 9923 / NRRL Y-1056) (Yeast), this protein is Vacuolar protein 8 (VAC8).